We begin with the raw amino-acid sequence, 210 residues long: Somatotropin (210 aa).

The signal sequence occupies residues 1–22 (MAKALVLLSLVLVSVFVNNGTA). H38 provides a ligand contact to Zn(2+). A disulfide bridge links C71 with C183. E192 is a binding site for Zn(2+). A disulfide bridge connects residues C200 and C208.

The protein belongs to the somatotropin/prolactin family.

The protein resides in the secreted. Growth hormone plays an important role in growth control and is involved in the regulation of several anabolic processes. Implicated as an osmoregulatory substance important for seawater adaptation. The chain is Somatotropin (gh) from Misgurnus mizolepis (Chinese weatherloach).